Reading from the N-terminus, the 257-residue chain is Protein KlaA (257 aa).

Functionally, belongs to the kla operon, which is associated with cryptic tellurite resistance, and IncW plasmid fertility inhibition. The protein is Protein KlaA (klaA) of Escherichia coli.